Reading from the N-terminus, the 767-residue chain is Probable ubiquitin carboxyl-terminal hydrolase creB (767 aa).

Residues 49 to 462 enclose the USP domain; the sequence is YGMENYGNTC…CAYVLFYQET (414 aa). The active-site Nucleophile is C58. Disordered regions lie at residues 107-140 and 232-263; these read EAEA…DSPE and ASKQ…KTPN. Polar residues predominate over residues 250 to 263; the sequence is SVDQSSSTGSKTPN. H413 serves as the catalytic Proton acceptor. Positions 490-767 are disordered; that stretch reads LKQNGFPQSP…LRKKSFSILS (278 aa). 2 stretches are compositionally biased toward low complexity: residues 540–554 and 564–573; these read ESAP…SPLS and ERVTTVATPP. The stretch at 574–641 forms a coiled coil; it reads KNDALAKKER…ASKAEEDRRL (68 aa). Basic and acidic residues predominate over residues 577-650; that stretch reads ALAKKERARE…LSHENGKEKQ (74 aa). A compositionally biased stretch (basic residues) spans 656 to 667; the sequence is RLKRGSKSLSHR. Residues 690 to 700 are compositionally biased toward polar residues; that stretch reads STLSQTGPTSE. Residues 701-713 show a composition bias toward low complexity; it reads QQQQQQQQQQQQQ. Over residues 731–749 the composition is skewed to basic and acidic residues; that stretch reads TIREDEQVNHKDSKHERTG. The segment covering 750-767 has biased composition (basic residues); that stretch reads HGKWRSFSLRKKSFSILS.

Belongs to the peptidase C19 family. In terms of assembly, interacts with creA, creC and qutD.

The enzyme catalyses Thiol-dependent hydrolysis of ester, thioester, amide, peptide and isopeptide bonds formed by the C-terminal Gly of ubiquitin (a 76-residue protein attached to proteins as an intracellular targeting signal).. Functionally, ubiquitin thioesterase component of the regulatory network controlling carbon source utilization through ubiquitination and deubiquitination involving creA, creB, creC, creD and acrB. Deubiquitinates the creA catabolic repressor and the quinate permease qutD. Also plays a role in response to carbon starvation and the control of extracellular proteases activity. The sequence is that of Probable ubiquitin carboxyl-terminal hydrolase creB (creB) from Aspergillus fumigatus (strain CBS 144.89 / FGSC A1163 / CEA10) (Neosartorya fumigata).